Reading from the N-terminus, the 458-residue chain is tRNA modification GTPase MnmE (458 aa).

R26, E88, and R127 together coordinate (6S)-5-formyl-5,6,7,8-tetrahydrofolate. Positions 224-378 constitute a TrmE-type G domain; sequence GLSTAIIGRP…IEERINDIFF (155 aa). N234 is a K(+) binding site. GTP is bound by residues 234–239, 253–259, and 278–281; these read NVGKSS, TDIEGTT, and DTAG. Mg(2+) is bound at residue S238. Positions 253, 255, and 258 each coordinate K(+). A Mg(2+)-binding site is contributed by T259. (6S)-5-formyl-5,6,7,8-tetrahydrofolate is bound at residue K458.

The protein belongs to the TRAFAC class TrmE-Era-EngA-EngB-Septin-like GTPase superfamily. TrmE GTPase family. As to quaternary structure, homodimer. Heterotetramer of two MnmE and two MnmG subunits. It depends on K(+) as a cofactor.

Its subcellular location is the cytoplasm. Exhibits a very high intrinsic GTPase hydrolysis rate. Involved in the addition of a carboxymethylaminomethyl (cmnm) group at the wobble position (U34) of certain tRNAs, forming tRNA-cmnm(5)s(2)U34. The sequence is that of tRNA modification GTPase MnmE from Streptococcus agalactiae serotype III (strain NEM316).